Reading from the N-terminus, the 380-residue chain is ER-phagy receptor 1 (380 aa).

One can recognise a J domain in the interval 9–74; that stretch reads DCYEILQVNH…DKRKWHEKDY (66 aa). The segment at 270-294 adopts a C2H2-type zinc-finger fold; sequence IMCMVCNKNFRSQNQLENHENSKKH. Residues 307 to 337 are disordered; it reads KHAKEAQKNAESNKQPEDAPSESPYSNKVSS. S344 bears the Phosphoserine mark. The AIM signature appears at 352–355; the sequence is FTFV. The FFAT motif lies at 361–367; it reads EFYTASE.

As to quaternary structure, interacts (via the AIM motif) with atg8. Interacts (via the FFAT motif) with the vesicle-associated membrane protein-associated protein (VAP) family proteins scs2 and scs22.

Its subcellular location is the endoplasmic reticulum. It localises to the preautophagosomal structure. Reticulophagy receptor required for autophagosomal sequestration of endoplasmic reticulum (ER) membranes during ER stress. Confers resistance to ER stress by promoting the autophagic degradation of the ER (ER-phagy or reticulophagy). Acts as a bridging molecule to mediate the association between atg8 on the autophagic membrane and the vesicle-associated membrane protein-associated proteins (VAPs) scs2 and scs22 on the ER. May play a role in meiosis. In Schizosaccharomyces pombe (strain 972 / ATCC 24843) (Fission yeast), this protein is ER-phagy receptor 1.